Here is a 257-residue protein sequence, read N- to C-terminus: Deoxyribose-phosphate aldolase (257 aa).

D102 functions as the Proton donor/acceptor in the catalytic mechanism. The active-site Schiff-base intermediate with acetaldehyde is K166. The active-site Proton donor/acceptor is K198.

This sequence belongs to the DeoC/FbaB aldolase family. DeoC type 2 subfamily.

The protein resides in the cytoplasm. It catalyses the reaction 2-deoxy-D-ribose 5-phosphate = D-glyceraldehyde 3-phosphate + acetaldehyde. The protein operates within carbohydrate degradation; 2-deoxy-D-ribose 1-phosphate degradation; D-glyceraldehyde 3-phosphate and acetaldehyde from 2-deoxy-alpha-D-ribose 1-phosphate: step 2/2. Functionally, catalyzes a reversible aldol reaction between acetaldehyde and D-glyceraldehyde 3-phosphate to generate 2-deoxy-D-ribose 5-phosphate. This chain is Deoxyribose-phosphate aldolase, found in Shewanella sediminis (strain HAW-EB3).